A 478-amino-acid polypeptide reads, in one-letter code: Cytochrome P450 monooxygenase ATR3 (478 aa).

Residues 20 to 42 (AVAFVTASALYYVLPAAISHIQL) traverse the membrane as a helical segment. N-linked (GlcNAc...) asparagine glycans are attached at residues asparagine 159 and asparagine 268.

It belongs to the cytochrome P450 family. It depends on heme as a cofactor.

Its subcellular location is the membrane. Its pathway is mycotoxin biosynthesis. Its function is as follows. Cytochrome P450 monooxygenase; part of the core atranone cluster (CAC) which products are predicted to catalyze most or all steps of mycotoxin atranone synthesis, starting from geranylgeranyl pyrophosphate (GGPP). The initial cyclization of GGPP to dolabellane is probably performed by the terpene cyclase ATR13. The Baeyer-Villiger oxidation near the end of the atranone synthesis, which converts atranones D and E to atranones F and G is predicted to be catalyzed by the monooxygenase ATR8. Of the CAC's other predicted gene products, the reducing PKS ATR6 might synthesize a polyketide chain. This polyketide is probably transferred onto the atranone backbone by the polyketide transferase ATR5. Other predicted CAC products include 4 oxygenases (ATR2, ATR3, ATR4, and ATR14), 3 short-chain reductases (ATR7, ATR9, and ATR10), and a methyltransferase (ATR12). These may all be involved in the various steps of atranone biosynthesis, although their specific roles must await experimental determination. This Stachybotrys chlorohalonatus (strain IBT 40285) protein is Cytochrome P450 monooxygenase ATR3.